The primary structure comprises 641 residues: Bilirubin reductase (641 aa).

Gln96 is a binding site for FMN. Residue Arg167 is the Proton donor of the active site. FMN contacts are provided by residues Lys214, Arg295, and 317–318; that span reads GR. [4Fe-4S] cluster-binding residues include Cys341, Cys344, Cys348, and Cys360. Ala391, Glu410, Gln418, Lys428, and Ala455 together coordinate FAD.

This sequence in the N-terminal section; belongs to the NADH:flavin oxidoreductase/NADH oxidase family. It depends on FAD as a cofactor. FMN serves as cofactor. [4Fe-4S] cluster is required as a cofactor.

The catalysed reaction is urobilinogen + 4 A = (4Z,15Z)-bilirubin IXalpha + 4 AH2. It catalyses the reaction urobilinogen + 2 A = (4Z,15Z)-mesobilirubin IXalpha + 2 AH2. It participates in porphyrin-containing compound metabolism; protoheme degradation. Its function is as follows. Bilirubin reductase that catalyzes reduction of mesobilirubin and/or bilirubin to urobilinogen, a key step during heme degradation. Urobilinogen then spontaneously degrades into urobilin, which gives urine its distinctive yellow color. The chain is Bilirubin reductase from Mediterraneibacter gnavus (strain CC55_001C).